The following is a 353-amino-acid chain: Photosystem II D2 protein (353 aa).

An N-acetylthreonine modification is found at Thr-2. Phosphothreonine is present on Thr-2. Residues 41–61 (CAYFALGGWFTGTTFVTSWYT) form a helical membrane-spanning segment. His-118 contributes to the chlorophyll a binding site. A helical transmembrane segment spans residues 125-141 (GFMLRQFELARSVQLRP). Residues Gln-130 and Asn-143 each contribute to the pheophytin a site. Residues 153-166 (VFVSVFLIYPLGQS) form a helical membrane-spanning segment. His-198 serves as a coordination point for chlorophyll a. The chain crosses the membrane as a helical span at residues 208-228 (AALLCAIHGATVENTLFEDGD). A plastoquinone-binding residues include His-215 and Phe-262. His-215 serves as a coordination point for Fe cation. His-269 provides a ligand contact to Fe cation. The chain crosses the membrane as a helical span at residues 279 to 295 (GLWMSAIGVVGLALNLR).

It belongs to the reaction center PufL/M/PsbA/D family. In terms of assembly, PSII is composed of 1 copy each of membrane proteins PsbA, PsbB, PsbC, PsbD, PsbE, PsbF, PsbH, PsbI, PsbJ, PsbK, PsbL, PsbM, PsbT, PsbX, PsbY, PsbZ, Psb30/Ycf12, at least 3 peripheral proteins of the oxygen-evolving complex and a large number of cofactors. It forms dimeric complexes. The D1/D2 heterodimer binds P680, chlorophylls that are the primary electron donor of PSII, and subsequent electron acceptors. It shares a non-heme iron and each subunit binds pheophytin, quinone, additional chlorophylls, carotenoids and lipids. There is also a Cl(-1) ion associated with D1 and D2, which is required for oxygen evolution. The PSII complex binds additional chlorophylls, carotenoids and specific lipids. is required as a cofactor.

It localises to the plastid. Its subcellular location is the chloroplast thylakoid membrane. It carries out the reaction 2 a plastoquinone + 4 hnu + 2 H2O = 2 a plastoquinol + O2. Photosystem II (PSII) is a light-driven water:plastoquinone oxidoreductase that uses light energy to abstract electrons from H(2)O, generating O(2) and a proton gradient subsequently used for ATP formation. It consists of a core antenna complex that captures photons, and an electron transfer chain that converts photonic excitation into a charge separation. The D1/D2 (PsbA/PsbD) reaction center heterodimer binds P680, the primary electron donor of PSII as well as several subsequent electron acceptors. D2 is needed for assembly of a stable PSII complex. The polypeptide is Photosystem II D2 protein (Cryptomeria japonica (Japanese cedar)).